The primary structure comprises 360 residues: Archaemetzincin-2 (360 aa).

His-254 is a Zn(2+) binding site. Glu-255 functions as the Proton acceptor in the catalytic mechanism. Zn(2+) is bound by residues His-258, His-264, Cys-265, Cys-270, Cys-289, and Cys-292.

It belongs to the peptidase M54 family. The cofactor is Zn(2+).

In terms of biological role, probable zinc metalloprotease. The protein is Archaemetzincin-2 (AMZ2) of Pongo abelii (Sumatran orangutan).